A 295-amino-acid polypeptide reads, in one-letter code: Tyrosine recombinase XerC (295 aa).

Residues 1-85 (MQNALQKYYD…ALRQFLAYLV (85 aa)) enclose the Core-binding (CB) domain. The Tyr recombinase domain occupies 106 to 285 (YLPKNIDQEQ…DFKHLTDVYD (180 aa)). Active-site residues include Arg-145, Lys-169, His-237, Arg-240, and His-263. Tyr-272 acts as the O-(3'-phospho-DNA)-tyrosine intermediate in catalysis.

This sequence belongs to the 'phage' integrase family. XerC subfamily. In terms of assembly, forms a cyclic heterotetrameric complex composed of two molecules of XerC and two molecules of XerD.

Its subcellular location is the cytoplasm. Its function is as follows. Site-specific tyrosine recombinase, which acts by catalyzing the cutting and rejoining of the recombining DNA molecules. The XerC-XerD complex is essential to convert dimers of the bacterial chromosome into monomers to permit their segregation at cell division. It also contributes to the segregational stability of plasmids. The polypeptide is Tyrosine recombinase XerC (Actinobacillus succinogenes (strain ATCC 55618 / DSM 22257 / CCUG 43843 / 130Z)).